A 529-amino-acid chain; its full sequence is Glucose-6-phosphate isomerase (529 aa).

Catalysis depends on Glu-322, which acts as the Proton donor. Active-site residues include His-351 and Lys-455.

Belongs to the GPI family.

It localises to the cytoplasm. The enzyme catalyses alpha-D-glucose 6-phosphate = beta-D-fructose 6-phosphate. It participates in carbohydrate biosynthesis; gluconeogenesis. The protein operates within carbohydrate degradation; glycolysis; D-glyceraldehyde 3-phosphate and glycerone phosphate from D-glucose: step 2/4. Catalyzes the reversible isomerization of glucose-6-phosphate to fructose-6-phosphate. The protein is Glucose-6-phosphate isomerase of Acaryochloris marina (strain MBIC 11017).